A 184-amino-acid chain; its full sequence is MSSTEQSTSRATTSTNCTKTEETVDVIGTVEVTECNWTMTEESRDAIIRIIKERMSHTEYQYVDDDVPNSERCHFCMKRKGRWMGDDCSDHSSLCKHCCYEMIRDSIKDYKSGPLYARCPQCFRNISSLTRRKRRLTSEGHDENCPAPMVPMVNAEHSISLCDYTTSMMGGGQVNKGFESSSSL.

This is an uncharacterized protein from Caenorhabditis elegans.